Reading from the N-terminus, the 134-residue chain is DHEIAAAAGVPIPTIFEMEGEQGFRSRETAILKKLIVLPHIVLSTGGGAVLKEENRALIRKSGTVVYLHAPPETLLERTRCDNSRPLLQVADPLAKLRELYAARDPVYRQTADFTVESANCRETVQTLLKRLSR.

The protein belongs to the shikimate kinase family.

It is found in the cytoplasm. The catalysed reaction is shikimate + ATP = 3-phosphoshikimate + ADP + H(+). It functions in the pathway metabolic intermediate biosynthesis; chorismate biosynthesis; chorismate from D-erythrose 4-phosphate and phosphoenolpyruvate: step 5/7. The sequence is that of Shikimate kinase (aroK) from Neisseria gonorrhoeae.